We begin with the raw amino-acid sequence, 601 residues long: NADH-quinone oxidoreductase subunit C/D (601 aa).

The segment at 1 to 191 (MKLTRDFPHN…DPFMLDAAKQ (191 aa)) is NADH dehydrogenase I subunit C. The tract at residues 215–601 (DYMFLNLGPN…IDFVMSDVDR (387 aa)) is NADH dehydrogenase I subunit D.

It in the N-terminal section; belongs to the complex I 30 kDa subunit family. In the C-terminal section; belongs to the complex I 49 kDa subunit family. In terms of assembly, NDH-1 is composed of 13 different subunits. Subunits NuoB, CD, E, F, and G constitute the peripheral sector of the complex.

The protein resides in the cell inner membrane. The catalysed reaction is a quinone + NADH + 5 H(+)(in) = a quinol + NAD(+) + 4 H(+)(out). NDH-1 shuttles electrons from NADH, via FMN and iron-sulfur (Fe-S) centers, to quinones in the respiratory chain. The immediate electron acceptor for the enzyme in this species is believed to be ubiquinone. Couples the redox reaction to proton translocation (for every two electrons transferred, four hydrogen ions are translocated across the cytoplasmic membrane), and thus conserves the redox energy in a proton gradient. The sequence is that of NADH-quinone oxidoreductase subunit C/D from Shewanella oneidensis (strain ATCC 700550 / JCM 31522 / CIP 106686 / LMG 19005 / NCIMB 14063 / MR-1).